Here is a 577-residue protein sequence, read N- to C-terminus: Cryptochrome DASH, chloroplastic/mitochondrial (577 aa).

The transit peptide at 1–53 directs the protein to the chloroplast and mitochondrion; the sequence is MIKQPFLLTKFTPFSSKSKHTLFTFHCNFSIKMASLTARTTPTVQNVPGLTPE. The Photolyase/cryptochrome alpha/beta domain maps to 78 to 219; that stretch reads GVAIVWFRND…GNDPGSGNTT (142 aa). Residues 550 to 577 form a disordered region; it reads TKKTGDSKTAFSSRRGRPEDNRRKRHGY.

This sequence belongs to the DNA photolyase class-1 family. The cofactor is FAD. (6R)-5,10-methylene-5,6,7,8-tetrahydrofolate serves as cofactor. Expressed in the endosperm and embryo 96 hours after seed imbibition. In the embryo, detected in the root meristem, the root cap, the shoot apical meristem and the epidermis of cotyledons. In adult plants, detcted in roots, the whole leaf lamina, the stem and in glandular trichomes.

It is found in the plastid. It localises to the chloroplast. Its subcellular location is the mitochondrion. May have a photoreceptor function and might bind ss- and ds-DNA in a sequence non-specific manner. Lacks photolyase activity. Has a potential role in detecting the dawn and dusk transitions and, consequently, in circadian input pathways. The sequence is that of Cryptochrome DASH, chloroplastic/mitochondrial from Solanum lycopersicum (Tomato).